Here is a 726-residue protein sequence, read N- to C-terminus: Long-chain-alcohol oxidase FAO4A (726 aa).

The helical transmembrane segment at 103–119 (ILLNWSSSYFSLLRMLF) threads the bilayer. Position 224–239 (224–239 (CDAVVVGSGSGGGVAA)) interacts with FAD. His-659 acts as the Proton acceptor in catalysis.

Belongs to the GMC oxidoreductase family.

It is found in the membrane. It catalyses the reaction a long-chain primary fatty alcohol + O2 = a long-chain fatty aldehyde + H2O2. In terms of biological role, long-chain fatty alcohol oxidase involved in the omega-oxidation pathway of lipid degradation. This chain is Long-chain-alcohol oxidase FAO4A (FAO4A), found in Arabidopsis thaliana (Mouse-ear cress).